Consider the following 115-residue polypeptide: Large ribosomal subunit protein bL20c (115 aa).

It belongs to the bacterial ribosomal protein bL20 family.

The protein localises to the plastid. The protein resides in the chloroplast. Functionally, binds directly to 23S ribosomal RNA and is necessary for the in vitro assembly process of the 50S ribosomal subunit. It is not involved in the protein synthesizing functions of that subunit. The protein is Large ribosomal subunit protein bL20c of Chlorokybus atmophyticus (Soil alga).